Reading from the N-terminus, the 363-residue chain is Crh-like protein 3 (363 aa).

An N-terminal signal peptide occupies residues 1 to 19 (MSLLYLVALFVASICSVTA). Cysteines 25 and 32 form a disulfide. The GH16 domain occupies 26 to 237 (NPLTTTCPPD…YSKAPFTMVL (212 aa)). 3 N-linked (GlcNAc...) asparagine glycosylation sites follow: Asn-41, Asn-47, and Asn-56. Catalysis depends on Glu-118, which acts as the Nucleophile. The active-site Proton donor is Glu-122. Glu-122 lines the chitin pocket. N-linked (GlcNAc...) asparagine glycans are attached at residues Asn-127, Asn-141, and Asn-161. Chitin is bound by residues Arg-203, Trp-207, and Thr-218. 2 N-linked (GlcNAc...) asparagine glycosylation sites follow: Asn-252 and Asn-269. Residues 298–318 (VYIGAGCVGAALLAGFIFFFI) form a helical membrane-spanning segment.

It belongs to the glycosyl hydrolase 16 family. CRH1 subfamily. Post-translationally, the GPI-like anchor contains a phosphoceramide lipid group. The anchor position has not been determined.

It localises to the cell membrane. The protein resides in the secreted. The protein localises to the cell wall. It catalyses the reaction Random endo-hydrolysis of N-acetyl-beta-D-glucosaminide (1-&gt;4)-beta-linkages in chitin and chitodextrins.. In terms of biological role, dual chitinase/transglycosylase that plays a role in cell wall architecture. Chitinase and transglycosylase activities are coupled. Required for the polysaccharide cross-linking at the septa and the cell wall. More specifically, transfers chitin to 1,6-beta-glucan in the cell wall. The sequence is that of Crh-like protein 3 from Aspergillus fumigatus (strain ATCC MYA-4609 / CBS 101355 / FGSC A1100 / Af293) (Neosartorya fumigata).